The chain runs to 188 residues: Elongation factor P (188 aa).

Belongs to the elongation factor P family.

Its subcellular location is the cytoplasm. The protein operates within protein biosynthesis; polypeptide chain elongation. Involved in peptide bond synthesis. Stimulates efficient translation and peptide-bond synthesis on native or reconstituted 70S ribosomes in vitro. Probably functions indirectly by altering the affinity of the ribosome for aminoacyl-tRNA, thus increasing their reactivity as acceptors for peptidyl transferase. The protein is Elongation factor P of Anaplasma phagocytophilum (strain HZ).